The sequence spans 264 residues: Thymidylate synthase (264 aa).

Residue Arg-21 coordinates dUMP. Residue His-51 participates in (6R)-5,10-methylene-5,6,7,8-tetrahydrofolate binding. Residue 126 to 127 (RR) coordinates dUMP. The active-site Nucleophile is Cys-146. Residues 166 to 169 (RSAD), Asn-177, and 207 to 209 (HLY) each bind dUMP. Residue Asp-169 coordinates (6R)-5,10-methylene-5,6,7,8-tetrahydrofolate. Residue Ala-263 coordinates (6R)-5,10-methylene-5,6,7,8-tetrahydrofolate.

Belongs to the thymidylate synthase family. Bacterial-type ThyA subfamily. In terms of assembly, homodimer.

It is found in the cytoplasm. The enzyme catalyses dUMP + (6R)-5,10-methylene-5,6,7,8-tetrahydrofolate = 7,8-dihydrofolate + dTMP. It participates in pyrimidine metabolism; dTTP biosynthesis. Catalyzes the reductive methylation of 2'-deoxyuridine-5'-monophosphate (dUMP) to 2'-deoxythymidine-5'-monophosphate (dTMP) while utilizing 5,10-methylenetetrahydrofolate (mTHF) as the methyl donor and reductant in the reaction, yielding dihydrofolate (DHF) as a by-product. This enzymatic reaction provides an intracellular de novo source of dTMP, an essential precursor for DNA biosynthesis. In Bartonella tribocorum (strain CIP 105476 / IBS 506), this protein is Thymidylate synthase.